Consider the following 293-residue polypeptide: ATP phosphoribosyltransferase (293 aa).

The protein belongs to the ATP phosphoribosyltransferase family. Long subfamily. The cofactor is Mg(2+).

Its subcellular location is the cytoplasm. It catalyses the reaction 1-(5-phospho-beta-D-ribosyl)-ATP + diphosphate = 5-phospho-alpha-D-ribose 1-diphosphate + ATP. Its pathway is amino-acid biosynthesis; L-histidine biosynthesis; L-histidine from 5-phospho-alpha-D-ribose 1-diphosphate: step 1/9. With respect to regulation, feedback inhibited by histidine. Catalyzes the condensation of ATP and 5-phosphoribose 1-diphosphate to form N'-(5'-phosphoribosyl)-ATP (PR-ATP). Has a crucial role in the pathway because the rate of histidine biosynthesis seems to be controlled primarily by regulation of HisG enzymatic activity. This chain is ATP phosphoribosyltransferase, found in Solidesulfovibrio magneticus (strain ATCC 700980 / DSM 13731 / RS-1) (Desulfovibrio magneticus).